The following is a 320-amino-acid chain: 1,5-anhydro-D-fructose reductase (320 aa).

Residue Tyr-40 is the Proton donor of the active site. His-102 lines the substrate pocket. NADP(+) is bound by residues Gln-194 and 265 to 277 (IPGS…IKEN).

It belongs to the aldo/keto reductase family. Monomer.

The protein resides in the cytoplasm. The catalysed reaction is 1,5-anhydro-D-glucitol + NADP(+) = 1,5-anhydro-D-fructose + NADPH + H(+). Inhibited by p-chloromercuribenzoic acid and alkyliodines. Functionally, catalyzes the NADPH-dependent reduction of 1,5-anhydro-D-fructose (AF) to 1,5-anhydro-D-glucitol. This is 1,5-anhydro-D-fructose reductase (AKR1E2) from Macaca fascicularis (Crab-eating macaque).